Consider the following 92-residue polypeptide: uncharacterized protein (92 aa).

In terms of biological role, homolog of shope fibroma virus T4A ORF. This is an uncharacterized protein from Swinepox virus (strain Kasza) (SWPV).